The following is a 347-amino-acid chain: UDP-3-O-acylglucosamine N-acyltransferase (347 aa).

His-248 acts as the Proton acceptor in catalysis.

It belongs to the transferase hexapeptide repeat family. LpxD subfamily. As to quaternary structure, homotrimer.

The catalysed reaction is a UDP-3-O-[(3R)-3-hydroxyacyl]-alpha-D-glucosamine + a (3R)-hydroxyacyl-[ACP] = a UDP-2-N,3-O-bis[(3R)-3-hydroxyacyl]-alpha-D-glucosamine + holo-[ACP] + H(+). It functions in the pathway bacterial outer membrane biogenesis; LPS lipid A biosynthesis. Catalyzes the N-acylation of UDP-3-O-acylglucosamine using 3-hydroxyacyl-ACP as the acyl donor. Is involved in the biosynthesis of lipid A, a phosphorylated glycolipid that anchors the lipopolysaccharide to the outer membrane of the cell. The polypeptide is UDP-3-O-acylglucosamine N-acyltransferase (Parasynechococcus marenigrum (strain WH8102)).